We begin with the raw amino-acid sequence, 292 residues long: Phosphatidylserine decarboxylase proenzyme (292 aa).

Catalysis depends on charge relay system; for autoendoproteolytic cleavage activity residues aspartate 89, histidine 146, and serine 252. Residue serine 252 is the Schiff-base intermediate with substrate; via pyruvic acid; for decarboxylase activity of the active site. Serine 252 carries the pyruvic acid (Ser); by autocatalysis modification.

It belongs to the phosphatidylserine decarboxylase family. PSD-B subfamily. Prokaryotic type I sub-subfamily. In terms of assembly, heterodimer of a large membrane-associated beta subunit and a small pyruvoyl-containing alpha subunit. Requires pyruvate as cofactor. Post-translationally, is synthesized initially as an inactive proenzyme. Formation of the active enzyme involves a self-maturation process in which the active site pyruvoyl group is generated from an internal serine residue via an autocatalytic post-translational modification. Two non-identical subunits are generated from the proenzyme in this reaction, and the pyruvate is formed at the N-terminus of the alpha chain, which is derived from the carboxyl end of the proenzyme. The autoendoproteolytic cleavage occurs by a canonical serine protease mechanism, in which the side chain hydroxyl group of the serine supplies its oxygen atom to form the C-terminus of the beta chain, while the remainder of the serine residue undergoes an oxidative deamination to produce ammonia and the pyruvoyl prosthetic group on the alpha chain. During this reaction, the Ser that is part of the protease active site of the proenzyme becomes the pyruvoyl prosthetic group, which constitutes an essential element of the active site of the mature decarboxylase.

It is found in the cell membrane. The catalysed reaction is a 1,2-diacyl-sn-glycero-3-phospho-L-serine + H(+) = a 1,2-diacyl-sn-glycero-3-phosphoethanolamine + CO2. It functions in the pathway phospholipid metabolism; phosphatidylethanolamine biosynthesis; phosphatidylethanolamine from CDP-diacylglycerol: step 2/2. Catalyzes the formation of phosphatidylethanolamine (PtdEtn) from phosphatidylserine (PtdSer). This Shewanella baltica (strain OS185) protein is Phosphatidylserine decarboxylase proenzyme.